Here is a 404-residue protein sequence, read N- to C-terminus: Cysteine desulfurase IscS (404 aa).

Pyridoxal 5'-phosphate is bound by residues 75–76 (AT), N155, Q183, and 203–205 (SSH). The residue at position 206 (K206) is an N6-(pyridoxal phosphate)lysine. T243 lines the pyridoxal 5'-phosphate pocket. Catalysis depends on C328, which acts as the Cysteine persulfide intermediate. C328 is a [2Fe-2S] cluster binding site.

The protein belongs to the class-V pyridoxal-phosphate-dependent aminotransferase family. NifS/IscS subfamily. In terms of assembly, homodimer. Forms a heterotetramer with IscU, interacts with other sulfur acceptors. The cofactor is pyridoxal 5'-phosphate.

It is found in the cytoplasm. The enzyme catalyses (sulfur carrier)-H + L-cysteine = (sulfur carrier)-SH + L-alanine. It functions in the pathway cofactor biosynthesis; iron-sulfur cluster biosynthesis. Functionally, master enzyme that delivers sulfur to a number of partners involved in Fe-S cluster assembly, tRNA modification or cofactor biosynthesis. Catalyzes the removal of elemental sulfur atoms from cysteine to produce alanine. Functions as a sulfur delivery protein for Fe-S cluster synthesis onto IscU, an Fe-S scaffold assembly protein, as well as other S acceptor proteins. The sequence is that of Cysteine desulfurase IscS from Haemophilus influenzae (strain PittGG).